Consider the following 245-residue polypeptide: Pyridoxine 5'-phosphate synthase (245 aa).

Asparagine 7 lines the 3-amino-2-oxopropyl phosphate pocket. 9–10 (DH) is a 1-deoxy-D-xylulose 5-phosphate binding site. Arginine 18 is a binding site for 3-amino-2-oxopropyl phosphate. The active-site Proton acceptor is the histidine 43. Positions 45 and 50 each coordinate 1-deoxy-D-xylulose 5-phosphate. Glutamate 70 serves as the catalytic Proton acceptor. Threonine 100 serves as a coordination point for 1-deoxy-D-xylulose 5-phosphate. Histidine 190 acts as the Proton donor in catalysis. 3-amino-2-oxopropyl phosphate-binding positions include glycine 191 and 212 to 213 (GH).

The protein belongs to the PNP synthase family. As to quaternary structure, homooctamer; tetramer of dimers.

It is found in the cytoplasm. It carries out the reaction 3-amino-2-oxopropyl phosphate + 1-deoxy-D-xylulose 5-phosphate = pyridoxine 5'-phosphate + phosphate + 2 H2O + H(+). The protein operates within cofactor biosynthesis; pyridoxine 5'-phosphate biosynthesis; pyridoxine 5'-phosphate from D-erythrose 4-phosphate: step 5/5. Its function is as follows. Catalyzes the complicated ring closure reaction between the two acyclic compounds 1-deoxy-D-xylulose-5-phosphate (DXP) and 3-amino-2-oxopropyl phosphate (1-amino-acetone-3-phosphate or AAP) to form pyridoxine 5'-phosphate (PNP) and inorganic phosphate. This Prochlorococcus marinus (strain NATL2A) protein is Pyridoxine 5'-phosphate synthase.